A 189-amino-acid polypeptide reads, in one-letter code: DAN domain family member 5 (189 aa).

Positions 1–22 (MLLGQLSTLLCLLSGALPTGSG) are cleaved as a signal peptide. A glycan (N-linked (GlcNAc...) asparagine) is linked at N38. 4 disulfide bridges follow: C101-C148, C115-C162, C125-C183, and C129-C185. The CTCK domain maps to 101-186 (CKAVPFVQVF…TMLIEGCHCS (86 aa)).

Belongs to the DAN family. Expressed in the retina, in inner segments of photoreceptors, at or close to the outer plexiform layer and in the ganglion cell layer (at protein level).

The protein resides in the secreted. Its function is as follows. Antagonist of the extracellular signaling protein NODAL, which is required for correct left-right patterning during embryonic development. Antagonist of BMP and TGF-beta signaling. Independently of its role in left-right axis establishment, plays a role during heart development, possibly through the regulation of TGF-beta/Nodal signaling pathway. Displays anti-angiogenic activity by inhibiting endothelial sprouting, migration, and proliferation. Once internalized by endothelial cells, may alter their redox and glycolytic balance. This is DAN domain family member 5 (DAND5) from Homo sapiens (Human).